A 513-amino-acid chain; its full sequence is Probable G-protein coupled receptor 176 (513 aa).

The tract at residues 1–25 (MGHNGSWVSPNTSHPRNTSGAQAGA) is disordered. The Extracellular portion of the chain corresponds to 1 to 41 (MGHNGSWVSPNTSHPRNTSGAQAGANSSAFGELSEAQLYRQ). Asn-4, Asn-11, Asn-17, and Asn-26 each carry an N-linked (GlcNAc...) asparagine glycan. The chain crosses the membrane as a helical span at residues 42-64 (FTTTVQVVIFIGSLLGNFTVLWS). Residues 65–77 (TCRTTVFKSVTNR) lie on the Cytoplasmic side of the membrane. The helical transmembrane segment at 78-98 (FIKNLACSGICASVVCVPFDI) threads the bilayer. The Extracellular segment spans residues 99–108 (ILSTSPHCCW). Residues 109 to 129 (WIYTMLFCKVLKFLHKVFCSV) form a helical membrane-spanning segment. The Cytoplasmic segment spans residues 130–157 (TVLSFPAIALDRYYSVLYPLERKISDAK). The helical transmembrane segment at 158 to 177 (SRELVMYIWAHAVVASVPVF) threads the bilayer. Over 178 to 204 (AVTNVADIYATSTCTEVWSNSLGHLVY) the chain is Extracellular. A helical membrane pass occupies residues 205–225 (VLIYNVTTVIVPVAVVFLFLI). At 226-264 (LIRRALSASQKKKVIIAALRTPQNTISIPYASQREAELH) the chain is on the cytoplasmic side. A helical transmembrane segment spans residues 265–285 (ATLLSMVTVFILCSVPYATLV). Over 286-301 (VYQTVLNVPNTSVFLL) the chain is Extracellular. A helical membrane pass occupies residues 302-322 (LTAIWLPKVSLLANPVLFLTV). Residues 323–513 (NRSVRKCLVG…KVSIFPKVDS (191 aa)) are Cytoplasmic-facing. Positions 404-432 (VLTSSPEGEESQLAPSVPPPGTVDSVSRV) are disordered.

This sequence belongs to the G-protein coupled receptor 1 family. Expressed in brain, lung, heart, stomach, intestine, cultured aortic smooth muscle cells and cardiac myocytes.

It localises to the cell membrane. Functionally, orphan receptor involved in normal circadian rhythm behavior. Acts through the G-protein subclass G(z)-alpha and has an agonist-independent basal activity to repress cAMP production. This is Probable G-protein coupled receptor 176 (Gpr176) from Rattus norvegicus (Rat).